We begin with the raw amino-acid sequence, 156 residues long: 3-hydroxyacyl-[acyl-carrier-protein] dehydratase FabZ (156 aa).

Residue His-61 is part of the active site.

Belongs to the thioester dehydratase family. FabZ subfamily.

The protein resides in the cytoplasm. It carries out the reaction a (3R)-hydroxyacyl-[ACP] = a (2E)-enoyl-[ACP] + H2O. Involved in unsaturated fatty acids biosynthesis. Catalyzes the dehydration of short chain beta-hydroxyacyl-ACPs and long chain saturated and unsaturated beta-hydroxyacyl-ACPs. The sequence is that of 3-hydroxyacyl-[acyl-carrier-protein] dehydratase FabZ from Acaryochloris marina (strain MBIC 11017).